The primary structure comprises 267 residues: Alkaline ceramidase 3 (267 aa).

Residues 1-33 (MAPAVDRKGYWGPTTSTLDWCEENYVVTLFVAE) lie on the Cytoplasmic side of the membrane. Residues Asp-19, Trp-20, Glu-22, Asn-24, and Glu-33 each contribute to the Ca(2+) site. The chain crosses the membrane as a helical span at residues 34-55 (FWNTVSNLIMIIPPIFGAIQGI). At 56–61 (RDRLEK) the chain is on the lumenal side. A helical membrane pass occupies residues 62–82 (RYIAAYLALTVVGMGSWCFHM). His-81 serves as a coordination point for Zn(2+). Residues 83 to 87 (TLKYE) lie on the Cytoplasmic side of the membrane. The helical transmembrane segment at 88 to 108 (MQLLDELPMIYSCCIFVYCMF) threads the bilayer. Over 109–118 (ECFKTKSSIN) the chain is Lumenal. Residues 119–139 (YHLLFTLFLYSLTVTTIYLKV) form a helical membrane-spanning segment. Over 140-141 (KE) the chain is Cytoplasmic. A helical transmembrane segment spans residues 142-162 (PIFHQVMYGMLVFTLVLRSIY). The Lumenal portion of the chain corresponds to 163–173 (IVTWVYPWLRG). The chain crosses the membrane as a helical span at residues 174–194 (LGYTSLTVFLLGFLLWNIDNI). Residues 195–215 (FCDSLRNFRKRVPPVLGVTTQ) are Cytoplasmic-facing. The helical transmembrane segment at 216-236 (FHAWWHILTGLGSYLHILFSL) threads the bilayer. Residues His-217 and His-221 each coordinate Zn(2+). At 237 to 267 (YTRTLYLRYRPKVKFLFGIWPAVMFEPQRKH) the chain is on the lumenal side.

This sequence belongs to the alkaline ceramidase family. The cofactor is Zn(2+). In terms of tissue distribution, up-regulated with age in cerebeLlum and cerebrum.

It is found in the endoplasmic reticulum membrane. It localises to the golgi apparatus membrane. The enzyme catalyses an N-acyl-(4R)-4-hydroxysphinganine + H2O = (4R)-hydroxysphinganine + a fatty acid. It carries out the reaction N-(5Z,8Z,11Z,14Z-eicosatetraenoyl)-sphing-4-enine + H2O = sphing-4-enine + (5Z,8Z,11Z,14Z)-eicosatetraenoate. The catalysed reaction is N-(5Z,8Z,11Z,14Z-eicosatetraenoyl)-sphinganine + H2O = sphinganine + (5Z,8Z,11Z,14Z)-eicosatetraenoate. It catalyses the reaction N-(5Z,8Z,11Z,14Z-eicosatetraenoyl)-(4R)-hydroxysphinganine + H2O = (4R)-hydroxysphinganine + (5Z,8Z,11Z,14Z)-eicosatetraenoate. The enzyme catalyses N-(11Z-eicosenoyl)-sphing-4-enine + H2O = (11Z)-eicosenoate + sphing-4-enine. It carries out the reaction N-(11Z-eicosenoyl)-sphinganine + H2O = (11Z)-eicosenoate + sphinganine. The catalysed reaction is N-(11Z-eicosenoyl)-(4R)-hydroxysphinganine + H2O = (11Z)-eicosenoate + (4R)-hydroxysphinganine. It catalyses the reaction N-(9Z-octadecenoyl)-sphing-4-enine + H2O = sphing-4-enine + (9Z)-octadecenoate. The enzyme catalyses N-(9Z-octadecenoyl)-sphinganine + H2O = sphinganine + (9Z)-octadecenoate. It carries out the reaction N-(9Z-octadecenoyl)-(4R)-hydroxysphinganine + H2O = (4R)-hydroxysphinganine + (9Z)-octadecenoate. The catalysed reaction is an N-acylsphing-4-enine + H2O = sphing-4-enine + a fatty acid. It catalyses the reaction an N-acylsphinganine + H2O = sphinganine + a fatty acid. It participates in lipid metabolism; sphingolipid metabolism. With respect to regulation, activated by Ca(2+) and inhibited by Zn(2+). Functionally, endoplasmic reticulum and Golgi ceramidase that catalyzes the hydrolysis of unsaturated long-chain C18:1-, C20:1- and C20:4-ceramides, dihydroceramides and phytoceramides into sphingoid bases like sphingosine and free fatty acids at alkaline pH. Ceramides, sphingosine, and its phosphorylated form sphingosine-1-phosphate are bioactive lipids that mediate cellular signaling pathways regulating several biological processes including cell proliferation, apoptosis and differentiation. Controls the generation of sphingosine in erythrocytes, and thereby sphingosine-1-phosphate in plasma. Through the regulation of ceramides and sphingosine-1-phosphate homeostasis in the brain may play a role in neurons survival and function. By regulating the levels of pro-inflammatory ceramides in immune cells and tissues, may modulate the inflammatory response. This chain is Alkaline ceramidase 3 (Acer3), found in Mus musculus (Mouse).